We begin with the raw amino-acid sequence, 156 residues long: UPF0756 membrane protein Exig_2210 (156 aa).

5 helical membrane passes run 5 to 25, 52 to 72, 83 to 103, 109 to 129, and 131 to 151; these read LFLI…LIIA, WGVT…DIGF, IGII…HGVG, PLVT…FRGV, and VGPL…DIIV.

Belongs to the UPF0756 family.

Its subcellular location is the cell membrane. This is UPF0756 membrane protein Exig_2210 from Exiguobacterium sibiricum (strain DSM 17290 / CCUG 55495 / CIP 109462 / JCM 13490 / 255-15).